The primary structure comprises 217 residues: MKFFVDTADTQAIAELNDLGMVDGVTTNPSLILKSGRDIIEVTKEICGIVSGPVSAEVVALEAEAMIAEGRKLAEIAENITVKLPLTWDGLKACKTLSDEGKMVNVTLCFSANQALLAAKAGASFISPFIGRLDDMSLDGCELIEDIRTIYDNYGFGTEILAASIRTVNHVQQVALIGADVMTAPPEVIQKLASHPLTDKGLQQFMSDWEKTGQKIL.

Lys83 acts as the Schiff-base intermediate with substrate in catalysis.

The protein belongs to the transaldolase family. Type 3B subfamily.

It is found in the cytoplasm. It carries out the reaction D-sedoheptulose 7-phosphate + D-glyceraldehyde 3-phosphate = D-erythrose 4-phosphate + beta-D-fructose 6-phosphate. It participates in carbohydrate degradation; pentose phosphate pathway; D-glyceraldehyde 3-phosphate and beta-D-fructose 6-phosphate from D-ribose 5-phosphate and D-xylulose 5-phosphate (non-oxidative stage): step 2/3. Transaldolase is important for the balance of metabolites in the pentose-phosphate pathway. This is Probable transaldolase from Roseobacter denitrificans (strain ATCC 33942 / OCh 114) (Erythrobacter sp. (strain OCh 114)).